We begin with the raw amino-acid sequence, 190 residues long: RNA pyrophosphohydrolase (190 aa).

In terms of domain architecture, Nudix hydrolase spans 6-149 (GYRPNVGIVL…KRGVYARALC (144 aa)). A Nudix box motif is present at residues 38-59 (GGMHSDETPVEAMYRELNEEIG).

Belongs to the Nudix hydrolase family. RppH subfamily. It depends on a divalent metal cation as a cofactor.

In terms of biological role, accelerates the degradation of transcripts by removing pyrophosphate from the 5'-end of triphosphorylated RNA, leading to a more labile monophosphorylated state that can stimulate subsequent ribonuclease cleavage. The chain is RNA pyrophosphohydrolase from Xylella fastidiosa (strain M12).